The following is a 328-amino-acid chain: Peroxidase 59 (328 aa).

A signal peptide spans 1–28 (MKTQTKVMGGHVLLTVFTLCMLCSGVRA). Gln-29 bears the Pyrrolidone carboxylic acid mark. Cystine bridges form between Cys-39–Cys-116, Cys-72–Cys-77, Cys-122–Cys-323, and Cys-200–Cys-232. Residue His-70 is the Proton acceptor of the active site. 5 residues coordinate Ca(2+): Asp-71, Val-74, Gly-76, Asp-78, and Ser-80. Pro-163 contacts substrate. A glycan (N-linked (GlcNAc...) asparagine) is linked at Asn-182. His-193 contacts heme b. Thr-194 is a binding site for Ca(2+). Asn-209 and Asn-239 each carry an N-linked (GlcNAc...) asparagine glycan. Ca(2+)-binding residues include Asp-245, Thr-248, Thr-251, and Asp-253. 2 N-linked (GlcNAc...) asparagine glycosylation sites follow: Asn-281 and Asn-310.

It belongs to the peroxidase family. Classical plant (class III) peroxidase subfamily. Requires heme b as cofactor. It depends on Ca(2+) as a cofactor. As to expression, slightly expressed in roots.

It localises to the secreted. It carries out the reaction 2 a phenolic donor + H2O2 = 2 a phenolic radical donor + 2 H2O. In terms of biological role, removal of H(2)O(2), oxidation of toxic reductants, biosynthesis and degradation of lignin, suberization, auxin catabolism, response to environmental stresses such as wounding, pathogen attack and oxidative stress. These functions might be dependent on each isozyme/isoform in each plant tissue. The sequence is that of Peroxidase 59 (PER59) from Arabidopsis thaliana (Mouse-ear cress).